We begin with the raw amino-acid sequence, 252 residues long: Neurexophilin-3 (252 aa).

The first 22 residues, 1 to 22 (MQLTRCCFVFLVQGSLYLVICG), serve as a signal peptide directing secretion. Residues 23–75 (QEDGPPGSEDPEHDDHEGQPRPRVPRKRGHISPKSRPLANSTLLGLLAPPGEV) are II. Positions 27–59 (PPGSEDPEHDDHEGQPRPRVPRKRGHISPKSRP) are disordered. A compositionally biased stretch (basic residues) spans 45–55 (RVPRKRGHISP). Residues Asn62, Asn127, Asn137, and Asn143 are each glycosylated (N-linked (GlcNAc...) asparagine). The tract at residues 76-157 (WGILGQPPNR…LVPPSKAVEF (82 aa)) is III. Positions 158–166 (HQEQQIFIE) are IV (linker domain). Positions 167 to 252 (AKASKIFNCR…HSDTPYYPSG (86 aa)) are v (Cys-rich).

The protein belongs to the neurexophilin family. Post-translationally, may be proteolytically processed at the boundary between the N-terminal non-conserved and the central conserved domain in neuron-like cells. In terms of tissue distribution, brain. Detected in several other tissues.

It is found in the secreted. Functionally, may be signaling molecules that resemble neuropeptides. Ligand for alpha-neurexins. The polypeptide is Neurexophilin-3 (Nxph3) (Rattus norvegicus (Rat)).